A 693-amino-acid polypeptide reads, in one-letter code: Tegument protein UL47 (693 aa).

Disordered regions lie at residues 1–32 (MSAR…DGVG) and 48–126 (ELEA…GYLG). Over residues 48 to 57 (ELEALEEMAG) the composition is skewed to acidic residues. The interval 50-75 (EALEEMAGDEPPVRRRREGPRARRRR) is RNA-binding. The Nuclear localization signal motif lies at 63 to 75 (RRRREGPRARRRR). The segment covering 63 to 75 (RRRREGPRARRRR) has biased composition (basic residues). The Nuclear export signal motif lies at 647–670 (SVLGPRVRVVDIMSQFRKLLMGDE).

The protein belongs to the alphaherpesvirinae HHV-1 UL47 family. In terms of assembly, interacts with US3 kinase. Interacts with UL31 and UL34; these interactions seem important for efficient virion nuclear egress. Interacts with UL41/VHS. In terms of processing, phosphorylated by US3. This phosphorylation is required for proper nuclear localization.

The protein localises to the virion tegument. It localises to the host nucleus. It is found in the host cytoplasm. In terms of biological role, tegument protein that can bind to various RNA transcripts. Plays a role in the attenuation of selective viral and cellular mRNA degradation by modulating the activity of host shutoff RNase UL41/VHS. Also plays a role in the primary envelopment of virions in the perinuclear space, probably by interacting with two nuclear egress proteins UL31 and UL34. This is Tegument protein UL47 from Homo sapiens (Human).